A 407-amino-acid chain; its full sequence is Lysine racemase (407 aa).

The N-terminal stretch at Met-1 to Ala-18 is a signal peptide. Residue Cys-19 is the site of N-palmitoyl cysteine attachment. Residue Cys-19 is the site of S-diacylglycerol cysteine attachment. An intrachain disulfide couples Cys-70 to Cys-96. The Proton acceptor role is filled by Lys-74. The residue at position 74 (Lys-74) is an N6-(pyridoxal phosphate)lysine. Arg-173 is a binding site for substrate. Tyr-299 serves as the catalytic Proton acceptor. Residue Met-347 participates in substrate binding.

Belongs to the alanine racemase family. Bsr subfamily. As to quaternary structure, forms a head-to-tail homodimer in the structure. It depends on pyridoxal 5'-phosphate as a cofactor.

The protein localises to the cell membrane. The protein resides in the periplasm. It carries out the reaction L-lysine = D-lysine. The enzyme catalyses L-arginine = D-arginine. The racemization activity of Lyr is completely inhibited by hydroxylamine. Amino-acid racemase that catalyzes the interconversion of L-lysine and D-lysine. To a lesser extent, is also able to interconvert arginine enantiomers. Cannot use methionine, asparagine, alanine, leucine, glutamine, phenylalanine and histidine as substrates. The sequence is that of Lysine racemase from Proteus mirabilis.